The following is a 146-amino-acid chain: Hemoglobin subunit delta (146 aa).

The 145-residue stretch at histidine 2–histidine 146 folds into the Globin domain. The residue at position 50 (serine 50) is a Phosphoserine. Residues histidine 63 and histidine 92 each contribute to the heme b site.

The protein belongs to the globin family. As to quaternary structure, heterotetramer of two delta chains and two alpha chains. In terms of tissue distribution, red blood cells.

This is Hemoglobin subunit delta (HBD) from Leontocebus nigricollis (Black-mantled tamarin).